The chain runs to 365 residues: Phosphatidylcholine:ceramide cholinephosphotransferase 2 (365 aa).

The tract at residues 9-50 (LEGHLESQTNDSTNTYTSPTEAVEEEGKNGKGKPKTLSNGLR) is disordered. Residues 14 to 28 (ESQTNDSTNTYTSPT) are compositionally biased toward polar residues. 5 helical membrane passes run 80–100 (GIAF…ITVV), 128–148 (FSVS…QWLF), 159–179 (FFFI…VTTL), 219–239 (ILCG…TYLF), and 248–268 (FWWY…CILV). His229 is an active-site residue. Residues His272 and Asp276 contribute to the active site. A helical membrane pass occupies residues 273-290 (YTVDVIIAYYITTRLFWW). Over 291 to 365 (YHSMANEKNL…KIGEDNEKST (75 aa)) the chain is Cytoplasmic. 4 S-palmitoyl cysteine lipidation sites follow: Cys331, Cys332, Cys343, and Cys348.

It belongs to the sphingomyelin synthase family. Post-translationally, palmitoylated on Cys-331, Cys-332, Cys-343 and Cys-348; which plays an important role in plasma membrane localization. Highest expression is detected in cortical bone, followed by vertebrae, kidney and liver. Expression levels are very low in spleen, muscle, heart, brown fat and thymus. Expressed in macrophages.

It is found in the cell membrane. The protein localises to the golgi apparatus membrane. The catalysed reaction is an N-acylsphing-4-enine + a 1,2-diacyl-sn-glycero-3-phosphocholine = a sphingomyelin + a 1,2-diacyl-sn-glycerol. The enzyme catalyses an N-acylsphinganine + a 1,2-diacyl-sn-glycero-3-phosphocholine = an N-acylsphinganine-1-phosphocholine + a 1,2-diacyl-sn-glycerol. It catalyses the reaction an N-acyl-(4R)-4-hydroxysphinganine + a 1,2-diacyl-sn-glycero-3-phosphocholine = an N-acyl-(4R)-4-hydroxysphinganine-phosphocholine + a 1,2-diacyl-sn-glycerol. It carries out the reaction an N-acylsphing-4-enine + a 1,2-diacyl-sn-glycero-3-phosphoethanolamine = an N-acylsphing-4-enine 1-phosphoethanolamine + a 1,2-diacyl-sn-glycerol. The catalysed reaction is an N-acylsphinganine + a 1,2-diacyl-sn-glycero-3-phosphoethanolamine = an N-acylsphinganine-1-phosphoethanolamine + a 1,2-diacyl-sn-glycerol. The enzyme catalyses an N-acyl-(4R)-4-hydroxysphinganine + a 1,2-diacyl-sn-glycero-3-phosphoethanolamine = an N-acyl-(4R)-4-hydroxysphinganine-1-phosphoethanolamine + a 1,2-diacyl-sn-glycerol. It catalyses the reaction 1,2-dihexadecanoyl-sn-glycero-3-phosphocholine + an N-acylsphing-4-enine = 1,2-dihexadecanoyl-sn-glycerol + a sphingomyelin. It carries out the reaction 1-(9Z-octadecenoyl)-2-acyl-sn-3-glycerol + a sphingomyelin = a 1-(9Z-octadecenoyl)-2-acyl-sn-glycero-3-phosphocholine + an N-acylsphing-4-enine. The catalysed reaction is N-hexadecanoylsphinganine + a 1,2-diacyl-sn-glycero-3-phosphocholine = N-hexadecanoyl-sphinganine-1-phosphocholine + a 1,2-diacyl-sn-glycerol. The enzyme catalyses N-hexadecanoyl-(4R)-hydroxysphinganine + a 1,2-diacyl-sn-glycero-3-phosphocholine = N-hexadecanoyl-(4R)-hydroxysphinganine-phosphocholine + a 1,2-diacyl-sn-glycerol. It catalyses the reaction N-hexadecanoylsphinganine + a 1,2-diacyl-sn-glycero-3-phosphoethanolamine = N-hexadecanoyl-sphinganine-1-phosphoethanolamine + a 1,2-diacyl-sn-glycerol. It carries out the reaction N-hexadecanoyl-(4R)-hydroxysphinganine + a 1,2-diacyl-sn-glycero-3-phosphoethanolamine = N-hexadecanoyl-(4R)-hydroxysphinganine-1-phosphoethanolamine + a 1,2-diacyl-sn-glycerol. It participates in sphingolipid metabolism. Sphingomyelin synthase that primarily contributes to sphingomyelin synthesis and homeostasis at the plasma membrane. Catalyzes the reversible transfer of phosphocholine moiety in sphingomyelin biosynthesis: in the forward reaction transfers phosphocholine head group of phosphatidylcholine (PC) on to ceramide (CER) to form ceramide phosphocholine (sphingomyelin, SM) and diacylglycerol (DAG) as by-product, and in the reverse reaction transfers phosphocholine from SM to DAG to form PC and CER. The direction of the reaction appears to depend on the levels of CER and DAG in the plasma membrane. Does not use free phosphorylcholine or CDP-choline as donors. Can also transfer phosphoethanolamine head group of phosphatidylethanolamine (PE) on to ceramide (CER) to form ceramide phosphoethanolamine (CPE). Regulates receptor-mediated signal transduction via mitogenic DAG and proapoptotic CER, as well as via SM, a structural component of membrane rafts that serve as platforms for signal transduction and protein sorting. To a lesser extent, plays a role in secretory transport via regulation of DAG pool at the Golgi apparatus and its downstream effects on PRKD1. Required for normal bone matrix mineralization. The protein is Phosphatidylcholine:ceramide cholinephosphotransferase 2 (Sgms2) of Mus musculus (Mouse).